Reading from the N-terminus, the 283-residue chain is Elongation factor Ts (283 aa).

The interval 80–83 is involved in Mg(2+) ion dislocation from EF-Tu; sequence TDFV.

The protein belongs to the EF-Ts family.

It is found in the cytoplasm. Associates with the EF-Tu.GDP complex and induces the exchange of GDP to GTP. It remains bound to the aminoacyl-tRNA.EF-Tu.GTP complex up to the GTP hydrolysis stage on the ribosome. The chain is Elongation factor Ts from Citrobacter koseri (strain ATCC BAA-895 / CDC 4225-83 / SGSC4696).